We begin with the raw amino-acid sequence, 207 residues long: Alpha/beta-tubulin-N-acetyltransferase 9 (207 aa).

The region spanning 35 to 180 is the N-acetyltransferase domain; it reads EELQRLTASE…QEVTLRLTVS (146 aa).

Belongs to the acetyltransferase family. GNAT subfamily.

The enzyme catalyses N-terminal L-methionyl-[tubulin] + acetyl-CoA = N-terminal N(alpha)-acetyl-L-methionyl-[tubulin] + CoA + H(+). In terms of biological role, N-acetyltransferase that mediates the acetylation of the N-terminal residues of alpha- and beta-tubulin. The sequence is that of Alpha/beta-tubulin-N-acetyltransferase 9 (NAT9) from Homo sapiens (Human).